The sequence spans 215 residues: LysM and putative peptidoglycan-binding domain-containing protein 2 (215 aa).

A disordered region spans residues 1–40; sequence MADSSPAPSLRAGGPREPRPSAPSPPPPHSRLGSEAEEAE. Position 2 is an N-acetylalanine (Ala-2). Phosphoserine occurs at positions 5, 24, 34, and 58. Positions 20–29 are enriched in pro residues; the sequence is PSAPSPPPPH. In terms of domain architecture, LysM spans 72–116; it reads VEHRVRAGDTLQGIALKYGVSMEQIKRANKLFTNDCIFLKKTLNI. The tract at residues 194–215 is disordered; that stretch reads AKKLKGESRDEEGLYTASLYHS.

The sequence is that of LysM and putative peptidoglycan-binding domain-containing protein 2 (LYSMD2) from Bos taurus (Bovine).